The following is a 571-amino-acid chain: Minichromosome maintenance protein 10 (571 aa).

Threonine 17 carries the post-translational modification Phosphothreonine. The residue at position 18 (serine 18) is a Phosphoserine. A zinc finger-like region spans residues 309 to 335 (CPIVNKKTHKKCGSPINISLHKCCDYH). The Bipartite nuclear localization signal signature appears at 435–451 (KKSTALSRELGKIMRRR). Sufficient for nuclear localization stretches follow at residues 435–512 (KKST…LLGK) and 453–553 (SSGL…KHFG). Over residues 451 to 471 (RESSGLEDKSVGERQKMKRTT) the composition is skewed to basic and acidic residues. A disordered region spans residues 451 to 473 (RESSGLEDKSVGERQKMKRTTES). Serine 453 and serine 454 each carry phosphoserine. The short motif at 512-527 (KKKTVINDLLHYKKEK) is the Bipartite nuclear localization signal element. The span at 548-561 (WQKHFGSKETKETS) shows a compositional bias: basic and acidic residues. Residues 548–571 (WQKHFGSKETKETSDGSASDLEII) are disordered.

Belongs to the MCM10 family. Self-associates; assembles into large homomultimeric complexes of approximately 800 kDa. Associates with the MCM2-7 complex and the DNA polymerase alpha:primase complex. Interacts with ORC1, ORC2, MCM2, MCM3, CDC54/MCM4, MCM6, CDC47/MCM7, RFA2, CDC45, POL1, PRI2, POL12, SIR2 and SIR3. The diubiquitinated form interacts with POL30/PCNA C-terminus. Diubiquitinated in a cell cycle-regulated manner. Ubiquitination first appears in late G(1) and persists throughout S phase.

It localises to the nucleus. In terms of biological role, required for DNA synthesis. Required for entry into or completion of S phase. Involved in DNA replication and seems to participate in the activation of the pre-replication complex (pre-RC) and in transcription elongation. May play a role as a key coordinator in assembling the replication fork. Proposed to function at replication origins following the binding of the MCM2-7 complex prior to the recruitment of CDC45. Probably is required to stimulate phosphorylation of the MCM2-7 complex by the CDC7-DBF4 kinase complex. May recruit the DNA polymerase alpha:primase complex to replication origins and is required to maintain it on chromatin independently of CDC45. May also play a role in transcriptional silencing. This Saccharomyces cerevisiae (strain ATCC 204508 / S288c) (Baker's yeast) protein is Minichromosome maintenance protein 10 (MCM10).